We begin with the raw amino-acid sequence, 130 residues long: Large ribosomal subunit protein bL12 (130 aa).

Belongs to the bacterial ribosomal protein bL12 family. In terms of assembly, homodimer. Part of the ribosomal stalk of the 50S ribosomal subunit. Forms a multimeric L10(L12)X complex, where L10 forms an elongated spine to which 2 to 4 L12 dimers bind in a sequential fashion. Binds GTP-bound translation factors.

Its function is as follows. Forms part of the ribosomal stalk which helps the ribosome interact with GTP-bound translation factors. Is thus essential for accurate translation. The polypeptide is Large ribosomal subunit protein bL12 (Mycolicibacterium vanbaalenii (strain DSM 7251 / JCM 13017 / BCRC 16820 / KCTC 9966 / NRRL B-24157 / PYR-1) (Mycobacterium vanbaalenii)).